Consider the following 303-residue polypeptide: BAG family molecular chaperone regulator 3 (303 aa).

The segment covering 1-11 (MMKMNTGTSPS) has biased composition (polar residues). A disordered region spans residues 1 to 27 (MMKMNTGTSPSVIGGGTSGNEWESRPG). Residues 45-119 (FRVRVKYGSV…LVVKEDPISQ (75 aa)) enclose the Ubiquitin-like domain. Residues 138 to 216 (SISDISFEVD…KYVEALDLLK (79 aa)) enclose the BAG domain. The disordered stretch occupies residues 249 to 268 (VEEEEEEPRNSNASSSSGTP). Over residues 258-267 (NSNASSSSGT) the composition is skewed to polar residues. Ser-263 is subject to Phosphoserine.

As to quaternary structure, binds to the ATPase domain of HSP70/HSC70 chaperones. Interacts with HSP70-1.

Its function is as follows. Co-chaperone that regulates diverse cellular pathways, such as programmed cell death and stress responses. This Arabidopsis thaliana (Mouse-ear cress) protein is BAG family molecular chaperone regulator 3 (BAG3).